Here is a 249-residue protein sequence, read N- to C-terminus: 5'-nucleotidase SurE (249 aa).

Aspartate 8, aspartate 9, serine 39, and asparagine 91 together coordinate a divalent metal cation.

Belongs to the SurE nucleotidase family. Requires a divalent metal cation as cofactor.

It is found in the cytoplasm. The enzyme catalyses a ribonucleoside 5'-phosphate + H2O = a ribonucleoside + phosphate. In terms of biological role, nucleotidase that shows phosphatase activity on nucleoside 5'-monophosphates. This Haemophilus influenzae (strain PittEE) protein is 5'-nucleotidase SurE.